Consider the following 158-residue polypeptide: Fucolectin (158 aa).

The segment at 16 to 148 is F5/8 type C-like; that stretch reads KATQSAQLRG…TSESLHLCEV (133 aa). Residues asparagine 35, aspartate 38, asparagine 40, and serine 49 each coordinate Ca(2+). Intrachain disulfides connect cysteine 50-cysteine 146, cysteine 82-cysteine 83, and cysteine 108-cysteine 124. The alpha-L-fucose site is built by histidine 52 and arginine 79. The short motif at 79 to 81 is the Cell attachment site element; it reads RGD. Arginine 86 provides a ligand contact to alpha-L-fucose. Residues cysteine 146 and glutamate 147 each coordinate Ca(2+).

Belongs to the fucolectin family. Homotrimer.

The protein localises to the secreted. Functionally, acts as a defensive agent. Recognizes blood group fucosylated oligosaccharides including A, B, H and Lewis B-type antigens. Does not recognize Lewis A antigen and has low affinity for monovalent haptens. The sequence is that of Fucolectin from Anguilla anguilla (European freshwater eel).